We begin with the raw amino-acid sequence, 954 residues long: Glycine dehydrogenase (decarboxylating) (954 aa).

Position 704 is an N6-(pyridoxal phosphate)lysine (Lys-704).

The protein belongs to the GcvP family. The glycine cleavage system is composed of four proteins: P, T, L and H. Pyridoxal 5'-phosphate serves as cofactor.

The catalysed reaction is N(6)-[(R)-lipoyl]-L-lysyl-[glycine-cleavage complex H protein] + glycine + H(+) = N(6)-[(R)-S(8)-aminomethyldihydrolipoyl]-L-lysyl-[glycine-cleavage complex H protein] + CO2. The glycine cleavage system catalyzes the degradation of glycine. The P protein binds the alpha-amino group of glycine through its pyridoxal phosphate cofactor; CO(2) is released and the remaining methylamine moiety is then transferred to the lipoamide cofactor of the H protein. The polypeptide is Glycine dehydrogenase (decarboxylating) (Rhizobium meliloti (strain 1021) (Ensifer meliloti)).